A 283-amino-acid chain; its full sequence is 2-dehydro-3-deoxyphosphooctonate aldolase (283 aa).

It belongs to the KdsA family.

Its subcellular location is the cytoplasm. The catalysed reaction is D-arabinose 5-phosphate + phosphoenolpyruvate + H2O = 3-deoxy-alpha-D-manno-2-octulosonate-8-phosphate + phosphate. It participates in carbohydrate biosynthesis; 3-deoxy-D-manno-octulosonate biosynthesis; 3-deoxy-D-manno-octulosonate from D-ribulose 5-phosphate: step 2/3. Its pathway is bacterial outer membrane biogenesis; lipopolysaccharide biosynthesis. The chain is 2-dehydro-3-deoxyphosphooctonate aldolase from Vibrio cholerae serotype O1 (strain ATCC 39315 / El Tor Inaba N16961).